The following is a 611-amino-acid chain: Procollagen galactosyltransferase 1-A (611 aa).

A signal peptide spans 1-24; the sequence is MSQAGVDRLLRGLQLLLLVLRLSA. Residues Asn-85, Asn-173, Asn-312, Asn-370, and Asn-568 are each glycosylated (N-linked (GlcNAc...) asparagine). The segment covering 575-591 has biased composition (basic and acidic residues); the sequence is WDRAKSRKTQQQEKLRS. A disordered region spans residues 575-611; sequence WDRAKSRKTQQQEKLRSEALNSPSLGSPFDNTARDEL. Positions 608-611 match the Prevents secretion from ER motif; it reads RDEL.

It belongs to the glycosyltransferase 25 family.

It is found in the endoplasmic reticulum lumen. The catalysed reaction is (5R)-5-hydroxy-L-lysyl-[collagen] + UDP-alpha-D-galactose = (5R)-5-O-(beta-D-galactosyl)-5-hydroxy-L-lysyl-[collagen] + UDP + H(+). Beta-galactosyltransferase that transfers beta-galactose to hydroxylysine residues of type I collagen. By acting on collagen glycosylation, facilitates the formation of collagen triple helix. The protein is Procollagen galactosyltransferase 1-A (colgalt1-a) of Xenopus laevis (African clawed frog).